Consider the following 220-residue polypeptide: UPF0319 protein YccT (220 aa).

The signal sequence occupies residues 1 to 20 (MKTGALATFLALCLPATVFA).

This sequence belongs to the UPF0319 family.

This chain is UPF0319 protein YccT, found in Salmonella heidelberg (strain SL476).